The primary structure comprises 400 residues: Diphosphomevalonate decarboxylase (400 aa).

The residue at position 2 (alanine 2) is an N-acetylalanine. (R)-5-diphosphomevalonate is bound by residues 23 to 26 and arginine 78; that span reads YWGK. Position 96 is a phosphoserine (serine 96). (R)-5-diphosphomevalonate contacts are provided by residues 156–161 and threonine 212; that span reads SGSACR.

It belongs to the diphosphomevalonate decarboxylase family. In terms of assembly, homodimer. As to expression, expressed in heart, skeletal muscle, lung, liver, brain, pancreas, kidney and placenta.

Its subcellular location is the cytoplasm. The enzyme catalyses (R)-5-diphosphomevalonate + ATP = isopentenyl diphosphate + ADP + phosphate + CO2. It participates in steroid biosynthesis; cholesterol biosynthesis. In terms of biological role, catalyzes the ATP dependent decarboxylation of (R)-5-diphosphomevalonate to form isopentenyl diphosphate (IPP). Functions in the mevalonate (MVA) pathway leading to isopentenyl diphosphate (IPP), a key precursor for the biosynthesis of isoprenoids and sterol synthesis. This Homo sapiens (Human) protein is Diphosphomevalonate decarboxylase (MVD).